The following is a 386-amino-acid chain: Chaperone protein DnaJ (386 aa).

The J domain maps to 5 to 70 (DYYEVLGVER…QKRAAYDRYG (66 aa)). The CR-type zinc-finger motif lies at 138–216 (GKDETIHVPQ…CGGHGQVKEE (79 aa)). The Zn(2+) site is built by cysteine 151, cysteine 154, cysteine 168, cysteine 171, cysteine 190, cysteine 193, cysteine 204, and cysteine 207. CXXCXGXG motif repeat units follow at residues 151-158 (CRPCEGTG), 168-175 (CETCGGHG), 190-197 (CHICQGRG), and 204-211 (CKTCGGHG).

The protein belongs to the DnaJ family. Homodimer. Requires Zn(2+) as cofactor.

It is found in the cytoplasm. In terms of biological role, participates actively in the response to hyperosmotic and heat shock by preventing the aggregation of stress-denatured proteins and by disaggregating proteins, also in an autonomous, DnaK-independent fashion. Unfolded proteins bind initially to DnaJ; upon interaction with the DnaJ-bound protein, DnaK hydrolyzes its bound ATP, resulting in the formation of a stable complex. GrpE releases ADP from DnaK; ATP binding to DnaK triggers the release of the substrate protein, thus completing the reaction cycle. Several rounds of ATP-dependent interactions between DnaJ, DnaK and GrpE are required for fully efficient folding. Also involved, together with DnaK and GrpE, in the DNA replication of plasmids through activation of initiation proteins. The protein is Chaperone protein DnaJ of Hyphomonas neptunium (strain ATCC 15444).